The sequence spans 65 residues: MKMKIFIITIVIALFITSIVEAQNKLDVKCVRLETCREPCKKQLCLLPMKCMNGKCVCSPSRKIC.

A signal peptide spans 1 to 22; sequence MKMKIFIITIVIALFITSIVEA. Cystine bridges form between Cys-30–Cys-51, Cys-36–Cys-56, and Cys-40–Cys-58.

It belongs to the short scorpion toxin superfamily. Potassium channel inhibitor family. Alpha-KTx 12 subfamily. Expressed by the venom gland.

It is found in the secreted. Its function is as follows. Inhibits voltage-gated potassium channels. In Lychas mucronatus (Chinese swimming scorpion), this protein is Potassium channel toxin alpha-KTx 12.6.